The primary structure comprises 472 residues: Alkaline phosphatase (472 aa).

The N-terminal stretch at 1 to 21 (MKQSAIALALLSCLITPVSQA) is a signal peptide. A Mg(2+)-binding site is contributed by aspartate 74. Aspartate 74 contacts Zn(2+). The active-site Phosphoserine intermediate is serine 125. Residues aspartate 176 and threonine 178 each coordinate Mg(2+). 2 disulfide bridges follow: cysteine 191–cysteine 201 and cysteine 309–cysteine 359. Glutamate 345 is a Mg(2+) binding site. Positions 350, 354, 392, 393, and 435 each coordinate Zn(2+).

It belongs to the alkaline phosphatase family. Homodimer. Mg(2+) serves as cofactor. The cofactor is Zn(2+).

The protein resides in the periplasm. It catalyses the reaction a phosphate monoester + H2O = an alcohol + phosphate. The sequence is that of Alkaline phosphatase (phoA) from Escherichia fergusonii (strain ATCC 35469 / DSM 13698 / CCUG 18766 / IAM 14443 / JCM 21226 / LMG 7866 / NBRC 102419 / NCTC 12128 / CDC 0568-73).